Reading from the N-terminus, the 775-residue chain is Subtilisin-like protease SBT4.1 (775 aa).

An N-terminal signal peptide occupies residues 1–23 (MAIAFHTFLLQLLLFFFASFAEA). Asparagine 24 carries an N-linked (GlcNAc...) asparagine glycan. Residues 24-106 (NDSRKTYLVQ…VSRSRNLKLQ (83 aa)) constitute a propeptide, activation peptide. Residues 29-105 (TYLVQMKVGG…EVSRSRNLKL (77 aa)) enclose the Inhibitor I9 domain. One can recognise a Peptidase S8 domain in the interval 110-606 (SWDFMNLTLK…SGHLNATKVR (497 aa)). N-linked (GlcNAc...) asparagine glycosylation is found at asparagine 115 and asparagine 126. The active-site Charge relay system is the aspartate 136. An N-linked (GlcNAc...) asparagine glycan is attached at asparagine 162. Histidine 196 serves as the catalytic Charge relay system. The region spanning 365–459 (FYPLLNEKAP…FLDEQKKGKL (95 aa)) is the PA domain. The N-linked (GlcNAc...) asparagine glycan is linked to asparagine 437. Serine 551 (charge relay system) is an active-site residue. Asparagine 601 carries an N-linked (GlcNAc...) asparagine glycan.

It belongs to the peptidase S8 family. In terms of processing, the C-terminal propeptide is autocleaved.

It localises to the secreted. This Arabidopsis thaliana (Mouse-ear cress) protein is Subtilisin-like protease SBT4.1.